The primary structure comprises 278 residues: Type II restriction enzyme AgeI (278 aa).

The protein belongs to the BsaWI type II restriction endonuclease family.

The enzyme catalyses Endonucleolytic cleavage of DNA to give specific double-stranded fragments with terminal 5'-phosphates.. A P subtype restriction enzyme that recognizes the double-stranded sequence 5'-ACCGGT-3' and cleaves after A-1. This Thalassovita gelatinovora (Thalassobius gelatinovorus) protein is Type II restriction enzyme AgeI (ageIR).